Reading from the N-terminus, the 450-residue chain is V-type proton ATPase subunit H (450 aa).

Belongs to the V-ATPase H subunit family. As to quaternary structure, V-ATPase is a heteromultimeric enzyme composed of a peripheral catalytic V1 complex (components A to H) attached to an integral membrane V0 proton pore complex (components: a, c, c', c'', d, e, f and VOA1).

Its subcellular location is the vacuole membrane. In terms of biological role, subunit of the V1 complex of vacuolar(H+)-ATPase (V-ATPase), a multisubunit enzyme composed of a peripheral complex (V1) that hydrolyzes ATP and a membrane integral complex (V0) that translocates protons. V-ATPase is responsible for acidifying and maintaining the pH of intracellular compartments. This subunit is essential for activity, but not assembly, of the enzyme complex. This subunit is also required for silencing the ATPase activity of V-ATPase when V1 is detached from V0. The sequence is that of V-type proton ATPase subunit H (vma13) from Schizosaccharomyces pombe (strain 972 / ATCC 24843) (Fission yeast).